The chain runs to 42 residues: Perlinhibin-related protein (42 aa).

In terms of processing, contains four disulfide bonds.

Its function is as follows. Inhibitor of shell growth. This is Perlinhibin-related protein from Haliotis laevigata (Smooth Australian abalone).